The chain runs to 309 residues: Sodium/potassium-transporting ATPase subunit beta-1 (309 aa).

Residues 1–45 lie on the Cytoplasmic side of the membrane; sequence MSKNNGKGAKGEFEFPQPAKKQTFSEMIYNPQEGTFFGRTGKSWS. The chain crosses the membrane as a helical; Signal-anchor for type II membrane protein span at residues 46 to 66; that stretch reads QLLLFYTIFYIVLAALFTICM. At 67–309 the chain is on the extracellular side; it reads QGLLSTISDT…GSVTFQILLD (243 aa). Asparagine 133 is a glycosylation site (N-linked (GlcNAc...) asparagine). Intrachain disulfides connect cysteine 143/cysteine 155 and cysteine 165/cysteine 179. Asparagine 211 carries N-linked (GlcNAc...) asparagine glycosylation. Cysteine 225 and cysteine 282 are joined by a disulfide.

This sequence belongs to the X(+)/potassium ATPases subunit beta family. The sodium/potassium-transporting ATPase is composed of a catalytic alpha subunit, an auxiliary non-catalytic beta subunit and an additional regulatory subunit. Interacts with nkain. In terms of tissue distribution, in embryos, it is expressed in the neurons of the CNS and PNS, in Garland cells and posterior spiracles. In adults, it is concentrated in the thorax and abdomen (muscle tissue, digestive system and Malpighian tubules) and weakly expressed in the head. Expression is diffuse in the nervous system.

The protein resides in the cell membrane. This is the non-catalytic component of the active enzyme, which catalyzes the hydrolysis of ATP coupled with the exchange of Na(+) and K(+) ions across the plasma membrane. The beta subunit regulates, through assembly of alpha/beta heterodimers, the number of sodium pumps transported to the plasma membrane. The polypeptide is Sodium/potassium-transporting ATPase subunit beta-1 (nrv1) (Drosophila melanogaster (Fruit fly)).